The primary structure comprises 463 residues: Succinate--CoA ligase [ADP-forming] subunit beta, mitochondrial (463 aa).

The transit peptide at 1-52 (MAASMFYGRLVAVATLRNHRPRTAQRAAAQVLGSSGLFNNHGLQVQQQQQRN) directs the protein to the mitochondrion. Residues 61 to 288 (MELLQEAGVS…SNSAYRQKKI (228 aa)) enclose the ATP-grasp domain. Position 78 is an N6-acetyllysine (lysine 78). The residue at position 84 (tyrosine 84) is a Phosphotyrosine. An N6-acetyllysine; alternate modification is found at lysine 88. N6-succinyllysine; alternate is present on lysine 88. ATP contacts are provided by residues lysine 98 and 105 to 107 (GRG). Residues lysine 129, lysine 139, lysine 143, and lysine 216 each carry the N6-acetyllysine modification. Mg(2+) contacts are provided by asparagine 258 and aspartate 272. Phosphoserine is present on serine 279. Asparagine 323 is a binding site for substrate. At threonine 341 the chain carries Phosphothreonine. At lysine 368 the chain carries N6-acetyllysine. Residue 380–382 (GIM) coordinates substrate.

It belongs to the succinate/malate CoA ligase beta subunit family. ATP-specific subunit beta subfamily. In terms of assembly, heterodimer of an alpha and a beta subunit. The beta subunit determines specificity for ATP. Interacts with ALAS2. It depends on Mg(2+) as a cofactor. Widely expressed. Not expressed in liver and lung.

Its subcellular location is the mitochondrion. It catalyses the reaction succinate + ATP + CoA = succinyl-CoA + ADP + phosphate. It participates in carbohydrate metabolism; tricarboxylic acid cycle; succinate from succinyl-CoA (ligase route): step 1/1. Inhibited by itaconate. Functionally, ATP-specific succinyl-CoA synthetase functions in the citric acid cycle (TCA), coupling the hydrolysis of succinyl-CoA to the synthesis of ATP and thus represents the only step of substrate-level phosphorylation in the TCA. The beta subunit provides nucleotide specificity of the enzyme and binds the substrate succinate, while the binding sites for coenzyme A and phosphate are found in the alpha subunit. The polypeptide is Succinate--CoA ligase [ADP-forming] subunit beta, mitochondrial (Homo sapiens (Human)).